A 219-amino-acid chain; its full sequence is 7-cyano-7-deazaguanine synthase (219 aa).

An ATP-binding site is contributed by F10 to L20. 4 residues coordinate Zn(2+): C188, C197, C200, and C203.

Belongs to the QueC family. Homodimer. Zn(2+) is required as a cofactor.

It catalyses the reaction 7-carboxy-7-deazaguanine + NH4(+) + ATP = 7-cyano-7-deazaguanine + ADP + phosphate + H2O + H(+). The protein operates within purine metabolism; 7-cyano-7-deazaguanine biosynthesis. In terms of biological role, catalyzes the ATP-dependent conversion of 7-carboxy-7-deazaguanine (CDG) to 7-cyano-7-deazaguanine (preQ(0)). The protein is 7-cyano-7-deazaguanine synthase of Clostridium botulinum (strain ATCC 19397 / Type A).